The chain runs to 214 residues: MGLRRWLRSACCCCPCRCLEEPARPEKEPLVSGNNPYSSFGATLERDDEKNLWSMPHDVSHTEADDDRILYNLIVIRNQQTKDSEEWQRLNYDIYTLRQIRREVRNRWRRILEDLGFQREADSLLSVTKLSTMSDSKNTRKAREMLLKLAEETSIFPASWELSERYLLVVDRLIALDAAEDFFKIASQMYPKKPGVPCLVDGQRKLHCLPFPSP.

A Cholesterol-binding sequence motif motif is present at residues 162–172; that stretch reads LSERYLLVVDR. The residue at position 213 (S213) is a Phosphoserine.

Belongs to the melanoregulin family. Identified in a complex with RILP and DCTN1; interacts directly with RILP, but does not interact directly with DCTN1. Interacts with PRPH2. Post-translationally, palmitoylated. Palmitoylation is required to maintain the protein at the melanosome membrane. In terms of tissue distribution, detected in melanocytes. Expressed in retina, in retinal pigment epithelium (at protein level). Widely expressed with higher expression in skin, heart, liver, testis and thymus. Detected in retina, in retinal pigment epithelium cells.

It localises to the apical cell membrane. The protein localises to the melanosome membrane. It is found in the lysosome membrane. Its subcellular location is the cytoplasmic vesicle membrane. Its function is as follows. Probably functions as a cargo-recognition protein that couples cytoplasmic vesicles to the transport machinery. Plays a role in hair pigmentation, a process that involves shedding of melanosome-containing vesicles from melanocytes, followed by phagocytosis of the melanosome-containing vesicles by keratinocytes. Functions on melanosomes as receptor for RILP and the complex formed by RILP and DCTN1, and thereby contributes to retrograde melanosome transport from the cell periphery to the center. Overexpression causes accumulation of late endosomes and/or lysosomes at the microtubule organising center (MTOC) at the center of the cell. Probably binds cholesterol and requires the presence of cholesterol in membranes to function in microtubule-mediated retrograde organelle transport. Binds phosphatidylinositol 3-phosphate, phosphatidylinositol 4-phosphate, phosphatidylinositol 5-phosphate and phosphatidylinositol 3,5-bisphosphate, but not phosphatidylinositol 3,4-bisphosphate or phosphatidylinositol 4,5-bisphosphate. Required for normal phagosome clearing and normal activation of lysosomal enzymes in lysosomes from retinal pigment epithelium cells. Required for normal degradation of the lipofuscin component N-retinylidene-N-retinylethanolamine (A2E) in the eye. May function in membrane fusion and regulate the biogenesis of disk membranes of photoreceptor rod cells. This chain is Melanoregulin (Mreg), found in Mus musculus (Mouse).